A 241-amino-acid chain; its full sequence is RxLR effector protein SFI5 (241 aa).

The N-terminal stretch at 1 to 20 (MLRQARPLVVLIAVTFLVAS) is a signal peptide. The RxLR-dEER motif lies at 44–62 (RLLRTHHATIKVNADSEER).

It belongs to the RxLR effector family.

It is found in the secreted. It localises to the host cell membrane. In terms of biological role, effector that suppresses flg22-induced post-translational MAP kinase activation in tomato but not in Arabidopsis. The perception of highly conserved pathogen- or microbe-associated molecular patterns (PAMPs/MAMPs), such as flg22, triggers converging signaling pathways recruiting MAP kinase cascades and inducing transcriptional re-programming, yielding a generic antimicrobial response. The sequence is that of RxLR effector protein SFI5 from Phytophthora infestans (strain T30-4) (Potato late blight agent).